Reading from the N-terminus, the 185-residue chain is Adenine phosphoribosyltransferase (185 aa).

Belongs to the purine/pyrimidine phosphoribosyltransferase family.

The protein localises to the cytoplasm. The catalysed reaction is AMP + diphosphate = 5-phospho-alpha-D-ribose 1-diphosphate + adenine. The protein operates within purine metabolism; AMP biosynthesis via salvage pathway; AMP from adenine: step 1/1. In terms of biological role, catalyzes a salvage reaction resulting in the formation of AMP, that is energically less costly than de novo synthesis. In Caenorhabditis elegans, this protein is Adenine phosphoribosyltransferase (aprt-1).